The sequence spans 229 residues: 1-(5-phosphoribosyl)-5-[(5-phosphoribosylamino)methylideneamino] imidazole-4-carboxamide isomerase (229 aa).

The Proton acceptor role is filled by D8. D125 (proton donor) is an active-site residue.

This sequence belongs to the HisA/HisF family.

The protein localises to the cytoplasm. The catalysed reaction is 1-(5-phospho-beta-D-ribosyl)-5-[(5-phospho-beta-D-ribosylamino)methylideneamino]imidazole-4-carboxamide = 5-[(5-phospho-1-deoxy-D-ribulos-1-ylimino)methylamino]-1-(5-phospho-beta-D-ribosyl)imidazole-4-carboxamide. It participates in amino-acid biosynthesis; L-histidine biosynthesis; L-histidine from 5-phospho-alpha-D-ribose 1-diphosphate: step 4/9. The protein is 1-(5-phosphoribosyl)-5-[(5-phosphoribosylamino)methylideneamino] imidazole-4-carboxamide isomerase of Thermococcus onnurineus (strain NA1).